The following is a 171-amino-acid chain: MPLLDSFTVDHTRMAAPAVRIAKNMTTPHGDQITVFDLRFCRPNNAILPERGIHTLEHLFAGFMRDHLNGDGVEIIDISPMGCRTGFYMSLIGTPDEARVAAAWKAAMEDVLRVSDQRSIPELNEFQCGTYSMHSLEEAHQIARQILASGIGINHNDTLALSAEQLTHLHP.

Fe cation-binding residues include His-54, His-58, and Cys-128.

Belongs to the LuxS family. As to quaternary structure, homodimer. It depends on Fe cation as a cofactor.

The enzyme catalyses S-(5-deoxy-D-ribos-5-yl)-L-homocysteine = (S)-4,5-dihydroxypentane-2,3-dione + L-homocysteine. Involved in the synthesis of autoinducer 2 (AI-2) which is secreted by bacteria and is used to communicate both the cell density and the metabolic potential of the environment. The regulation of gene expression in response to changes in cell density is called quorum sensing. Catalyzes the transformation of S-ribosylhomocysteine (RHC) to homocysteine (HC) and 4,5-dihydroxy-2,3-pentadione (DPD). In Edwardsiella ictaluri (strain 93-146), this protein is S-ribosylhomocysteine lyase.